A 913-amino-acid polypeptide reads, in one-letter code: DNA mismatch repair protein MutS (913 aa).

720 to 727 serves as a coordination point for ATP; it reads GPNASGKS.

This sequence belongs to the DNA mismatch repair MutS family.

In terms of biological role, this protein is involved in the repair of mismatches in DNA. It is possible that it carries out the mismatch recognition step. This protein has a weak ATPase activity. The chain is DNA mismatch repair protein MutS from Prochlorococcus marinus (strain MIT 9312).